The following is a 213-amino-acid chain: Histidine biosynthesis bifunctional protein HisIE (213 aa).

The interval 1-114 is phosphoribosyl-AMP cyclohydrolase; it reads MLTTEKYQGL…FHPALTDFSF (114 aa). The interval 115-213 is phosphoribosyl-ATP pyrophosphohydrolase; sequence LFQLENIISI…RVRSKLKKKH (99 aa).

This sequence in the N-terminal section; belongs to the PRA-CH family. In the C-terminal section; belongs to the PRA-PH family.

It localises to the cytoplasm. The catalysed reaction is 1-(5-phospho-beta-D-ribosyl)-ATP + H2O = 1-(5-phospho-beta-D-ribosyl)-5'-AMP + diphosphate + H(+). The enzyme catalyses 1-(5-phospho-beta-D-ribosyl)-5'-AMP + H2O = 1-(5-phospho-beta-D-ribosyl)-5-[(5-phospho-beta-D-ribosylamino)methylideneamino]imidazole-4-carboxamide. The protein operates within amino-acid biosynthesis; L-histidine biosynthesis; L-histidine from 5-phospho-alpha-D-ribose 1-diphosphate: step 2/9. It functions in the pathway amino-acid biosynthesis; L-histidine biosynthesis; L-histidine from 5-phospho-alpha-D-ribose 1-diphosphate: step 3/9. This chain is Histidine biosynthesis bifunctional protein HisIE, found in Blochmanniella floridana.